Here is a 153-residue protein sequence, read N- to C-terminus: Aspartate carbamoyltransferase regulatory chain (153 aa).

Positions 109, 114, 138, and 141 each coordinate Zn(2+).

Belongs to the PyrI family. Contains catalytic and regulatory chains. It depends on Zn(2+) as a cofactor.

Involved in allosteric regulation of aspartate carbamoyltransferase. This Escherichia coli O7:K1 (strain IAI39 / ExPEC) protein is Aspartate carbamoyltransferase regulatory chain.